A 175-amino-acid chain; its full sequence is Adenine phosphoribosyltransferase (175 aa).

The protein belongs to the purine/pyrimidine phosphoribosyltransferase family. In terms of assembly, homodimer.

Its subcellular location is the cytoplasm. It carries out the reaction AMP + diphosphate = 5-phospho-alpha-D-ribose 1-diphosphate + adenine. It participates in purine metabolism; AMP biosynthesis via salvage pathway; AMP from adenine: step 1/1. Its function is as follows. Catalyzes a salvage reaction resulting in the formation of AMP, that is energically less costly than de novo synthesis. The polypeptide is Adenine phosphoribosyltransferase (Synechococcus sp. (strain JA-3-3Ab) (Cyanobacteria bacterium Yellowstone A-Prime)).